Here is a 244-residue protein sequence, read N- to C-terminus: Derlin-2.1 (244 aa).

Topologically, residues 1–21 (MAQAVEEWYKQMPIITRSYLT) are cytoplasmic. Residues 22–42 (AAVVTTVGCSLEIISPYNLYL) traverse the membrane as a helical segment. Residues 43 to 96 (NPTLVVKQYQFWRLVTNFLYFRKMDLDFLFHMFFLARYCKLLEENSFRGKTADF) lie on the Lumenal side of the membrane. A helical transmembrane segment spans residues 97–117 (LYMLLFGATVLTGIVLIGGMI). Residues 118-121 (PYLS) lie on the Cytoplasmic side of the membrane. Residues 122–142 (VSFSKIIFLSNSLTFMMVYVW) form a helical membrane-spanning segment. Residues 143-152 (SKQNPYIHMS) lie on the Lumenal side of the membrane. Residues 153-173 (FLGLFTFTAAYLPWVLLGFSI) traverse the membrane as a helical segment. Over 174–244 (LVGASAWGDF…HAPFDEIHQD (71 aa)) the chain is Cytoplasmic.

It belongs to the derlin family.

It localises to the endoplasmic reticulum membrane. Its function is as follows. May be involved in the degradation process of specific misfolded endoplasmic reticulum (ER) luminal proteins. This Arabidopsis thaliana (Mouse-ear cress) protein is Derlin-2.1 (DER2.1).